The sequence spans 105 residues: Heat shock protein HspQ (105 aa).

Residues 76-105 form a disordered region; it reads EMRDEHPEQPSMDELARTIRKQLQAPRLRN.

It belongs to the HspQ family.

The protein resides in the cytoplasm. Functionally, involved in the degradation of certain denaturated proteins, including DnaA, during heat shock stress. In Salmonella agona (strain SL483), this protein is Heat shock protein HspQ.